The following is a 156-amino-acid chain: SsrA-binding protein (156 aa).

The protein belongs to the SmpB family.

It localises to the cytoplasm. Required for rescue of stalled ribosomes mediated by trans-translation. Binds to transfer-messenger RNA (tmRNA), required for stable association of tmRNA with ribosomes. tmRNA and SmpB together mimic tRNA shape, replacing the anticodon stem-loop with SmpB. tmRNA is encoded by the ssrA gene; the 2 termini fold to resemble tRNA(Ala) and it encodes a 'tag peptide', a short internal open reading frame. During trans-translation Ala-aminoacylated tmRNA acts like a tRNA, entering the A-site of stalled ribosomes, displacing the stalled mRNA. The ribosome then switches to translate the ORF on the tmRNA; the nascent peptide is terminated with the 'tag peptide' encoded by the tmRNA and targeted for degradation. The ribosome is freed to recommence translation, which seems to be the essential function of trans-translation. The polypeptide is SsrA-binding protein (Staphylococcus carnosus (strain TM300)).